We begin with the raw amino-acid sequence, 86 residues long: Large ribosomal subunit protein uL23 (86 aa).

The protein belongs to the universal ribosomal protein uL23 family. In terms of assembly, part of the 50S ribosomal subunit. Contacts protein L29.

Its function is as follows. Binds to 23S rRNA. One of the proteins that surrounds the polypeptide exit tunnel on the outside of the ribosome. The chain is Large ribosomal subunit protein uL23 from Methanothermobacter thermautotrophicus (strain ATCC 29096 / DSM 1053 / JCM 10044 / NBRC 100330 / Delta H) (Methanobacterium thermoautotrophicum).